A 245-amino-acid chain; its full sequence is NAD-dependent protein deacetylase (245 aa).

Residues 1–245 (MLLLDKINEL…SIGKVLETVI (245 aa)) enclose the Deacetylase sirtuin-type domain. NAD(+) contacts are provided by Ala-26, Thr-30, Phe-37, Arg-38, Gln-107, Ile-109, Asp-110, and His-125. Phe-37 is a binding site for nicotinamide. Residues Ile-109 and Asp-110 each contribute to the nicotinamide site. His-125 acts as the Proton acceptor in catalysis. Positions 133, 136, 155, and 158 each coordinate Zn(2+). The NAD(+) site is built by Thr-196, Ser-197, Asn-219, and Ile-237.

It belongs to the sirtuin family. Class U subfamily. The cofactor is Zn(2+).

The protein resides in the cytoplasm. The catalysed reaction is N(6)-acetyl-L-lysyl-[protein] + NAD(+) + H2O = 2''-O-acetyl-ADP-D-ribose + nicotinamide + L-lysyl-[protein]. In terms of biological role, NAD-dependent protein deacetylase which modulates the activities of several enzymes which are inactive in their acetylated form. The protein is NAD-dependent protein deacetylase of Clostridium acetobutylicum (strain ATCC 824 / DSM 792 / JCM 1419 / IAM 19013 / LMG 5710 / NBRC 13948 / NRRL B-527 / VKM B-1787 / 2291 / W).